The following is a 205-amino-acid chain: Molybdenum cofactor guanylyltransferase (205 aa).

GTP is bound by residues 14–16, Lys-27, Asp-77, and Asp-107; that span reads LAG. Residue Asp-107 participates in Mg(2+) binding.

This sequence belongs to the MobA family. In terms of assembly, monomer. Mg(2+) serves as cofactor.

The protein resides in the cytoplasm. The enzyme catalyses Mo-molybdopterin + GTP + H(+) = Mo-molybdopterin guanine dinucleotide + diphosphate. Transfers a GMP moiety from GTP to Mo-molybdopterin (Mo-MPT) cofactor (Moco or molybdenum cofactor) to form Mo-molybdopterin guanine dinucleotide (Mo-MGD) cofactor. The chain is Molybdenum cofactor guanylyltransferase from Burkholderia vietnamiensis (strain G4 / LMG 22486) (Burkholderia cepacia (strain R1808)).